The primary structure comprises 602 residues: T-cell surface protein tactile (602 aa).

The N-terminal stretch at 1–21 is a signal peptide; it reads MGRKWTYCVVYTIIQIQFFRG. Residues 22 to 536 lie on the Extracellular side of the membrane; the sequence is VWEELFNVGD…IIVNQPSDGM (515 aa). 2 Ig-like V-type domains span residues 24 to 134 and 138 to 244; these read EELF…VYNL and PYTQ…STTV. N-linked (GlcNAc...) asparagine glycosylation is found at Asn42, Asn100, Asn107, Asn145, Asn153, Asn163, Asn195, Asn196, Asn258, Asn281, Asn306, Asn330, Asn348, Asn415, Asn436, and Asn514. A disulfide bridge connects residues Cys45 and Cys118. Cys160 and Cys228 are joined by a disulfide. Residues 250-355 enclose the Ig-like C2-type domain; sequence PEILMTVENS…MWNTSSQPIT (106 aa). Cys271 and Cys335 are disulfide-bonded. Positions 402-478 are disordered; that stretch reads ENGLTPDATP…PQEPDSPVSW (77 aa). A compositionally biased stretch (polar residues) spans 409–433; that stretch reads ATPQTSNSSMTTKDGNYLEASSGTD. Residues 434 to 448 show a composition bias toward low complexity; the sequence is AKNSSRAAASSKSGS. The helical transmembrane segment at 537-557 threads the bilayer; sequence SWPVLVAALLFFCTLLFGLGV. Over 558–602 the chain is Cytoplasmic; it reads RKWYRYQNEIMERPPPFKPPPPPIKYTYIQEPIGCDLCCHEMEVL.

In terms of assembly, homodimer; disulfide-linked. Interacts with PVR.

It localises to the membrane. May be involved in adhesive interactions of activated T and NK cells during the late phase of the immune response. Promotes NK cell-target adhesion by interacting with PVR present on target cells. May function at a time after T and NK cells have penetrated the endothelium using integrins and selectins, when they are actively engaging diseased cells and moving within areas of inflammation. The chain is T-cell surface protein tactile (Cd96) from Mus musculus (Mouse).